We begin with the raw amino-acid sequence, 264 residues long: uncharacterized protein (264 aa).

The first 22 residues, 1–22 (MKSIKRIGLCISLLILIIFVTS), serve as a signal peptide directing secretion. Residue cysteine 23 is the site of N-palmitoyl cysteine attachment. Cysteine 23 carries S-diacylglycerol cysteine lipidation.

The protein belongs to the staphylococcal tandem lipoprotein family.

The protein resides in the cell membrane. This is an uncharacterized protein from Staphylococcus aureus (strain MRSA252).